The following is a 230-amino-acid chain: Claudin-2 (230 aa).

At 1–7 (MASLGLQ) the chain is on the cytoplasmic side. The chain crosses the membrane as a helical span at residues 8–28 (LVGYILGLLGLLGTLVAMLLP). The Extracellular portion of the chain corresponds to 29–81 (SWRTSSYVGTSIVTAVGFSKGLWMECATHSTGITQCDIYSTLLGLPADIQAAQ). Cys54 and Cys64 are oxidised to a cystine. Residues 82–102 (AMMVTSSAISSLACIVSVVGM) form a helical membrane-spanning segment. Residues 103–116 (RCTVFCQDSRAKDR) are Cytoplasmic-facing. A helical membrane pass occupies residues 117–137 (LAVVGGVFFIIGGLLGFIPVA). The Extracellular segment spans residues 138–162 (WNLHGILRDFYSPLVPDSMKFEIGE). A helical membrane pass occupies residues 163 to 183 (ALYLGIISSLFSLVAGIILCF). Over 184–230 (SCPLQGNRSDYYDSYQAQPLATRGSPRPGQPPKAKSEFNSYSLTGYV) the chain is Cytoplasmic. Residues 205-230 (TRGSPRPGQPPKAKSEFNSYSLTGYV) form a disordered region. Lys218 participates in a covalent cross-link: Glycyl lysine isopeptide (Lys-Gly) (interchain with G-Cter in SUMO). Phosphoserine is present on residues Ser219 and Ser223. Residues 220–230 (EFNSYSLTGYV) show a composition bias toward polar residues. Residues 229-230 (YV) form an interaction with TJP1, TJP2 and TJP3 region.

The protein belongs to the claudin family. In terms of assembly, can form homo- and heteropolymers with other claudins to mediate paracellular barrier and channel functions of tight junctions in response to physiological stimuli. Homopolymers interact with CLDN3, but not CLDN1, homopolymers. Directly interacts with TJP1/ZO-1, TJP2/ZO-2 and TJP3/ZO-3. Post-translationally, the disulfide bond is necessary for pore formation, but is not required for correct protein trafficking.

Its subcellular location is the cell junction. The protein localises to the tight junction. It localises to the cell membrane. It catalyses the reaction Na(+)(in) = Na(+)(out). The catalysed reaction is K(+)(in) = K(+)(out). It carries out the reaction Rb(+)(in) = Rb(+)(out). The enzyme catalyses Li(+)(in) = Li(+)(out). It catalyses the reaction Cs(+)(in) = Cs(+)(out). The catalysed reaction is Ca(2+)(in) = Ca(2+)(out). It carries out the reaction methylamine(out) = methylamine(in). The enzyme catalyses choline(out) = choline(in). It catalyses the reaction H2O(in) = H2O(out). In terms of biological role, forms paracellular channels: polymerizes in tight junction strands with cation- and water-selective channels through the strands, conveying epithelial permeability in a process known as paracellular tight junction permeability. In intestinal epithelium, allows for sodium and water fluxes from the peritoneal side to the lumen of the intestine to regulate nutrient absorption and clear enteric pathogens as part of mucosal immune response. In kidney, allows passive sodium and calcium reabsorption across proximal tubules from the lumen back to the bloodstream. In the hepatobiliary tract, allows paracellular water and cation fluxes in the hepatic perivenous areas and biliary epithelium to generate bile flow and maintain osmotic gradients. This chain is Claudin-2 (CLDN2), found in Canis lupus familiaris (Dog).